Consider the following 109-residue polypeptide: uncharacterized protein (109 aa).

It is found in the mitochondrion. This is an uncharacterized protein from Marchantia polymorpha (Common liverwort).